The sequence spans 1330 residues: Ubinuclein-2 (1330 aa).

A disordered region spans residues 1 to 133; sequence MAEPRRVAFI…PRETVRLELV (133 aa). Ser13 carries the post-translational modification Phosphoserine. Basic and acidic residues-rich tracts occupy residues 16-37 and 67-79; these read RRRE…EPPR and PREK…EVSR. Positions 93–111 are enriched in pro residues; that stretch reads PEPPPPPLPQLHLQPPPPR. A compositionally biased stretch (basic and acidic residues) spans 123-133; that stretch reads PPRETVRLELV. Residue Thr244 is modified to Phosphothreonine. Positions 249–304 are disordered; it reads QASDTEEDDTTDNQKHKPPKIPKIKEDDIEMKKRKRKEEGEKEKKPRKKVPKQLGV. Ser251 carries the phosphoserine modification. A Phosphothreonine modification is found at Thr253. Lys273 participates in a covalent cross-link: Glycyl lysine isopeptide (Lys-Gly) (interchain with G-Cter in SUMO2). At Ser312 the chain carries Phosphoserine. Positions 336–356 are disordered; it reads KDALKKESNPKTPLNFSTSSL. Residues 345–356 show a composition bias toward polar residues; it reads PKTPLNFSTSSL. A phosphoserine mark is found at Ser417, Ser420, Ser423, and Ser585. 7 disordered regions span residues 574-597, 672-730, 802-833, 864-913, 938-988, 1017-1201, and 1308-1330; these read FQTD…GKRV, LTSA…STPV, PKKL…DLAH, GLQR…VTKV, PVVK…SRTV, MAAS…GSSV, and HVQQ…RKSQ. Basic and acidic residues-rich tracts occupy residues 575-585 and 688-699; these read QTDEEREKNGS and KVKECSPKKDQK. The segment covering 701–730 has biased composition (low complexity); the sequence is PASSVASVGGPSTSSSTSAVASTSSGSTPV. A compositionally biased stretch (polar residues) spans 807 to 816; that stretch reads STQTAHSSSL. Residues 864–895 show a composition bias toward low complexity; sequence GLQRSSQIHASSSSQTHVSSSSQAQVAASSHT. 2 stretches are compositionally biased toward polar residues: residues 896–913 and 938–956; these read LGTS…VTKV and PVVK…PLTK. Residues 1017–1029 are compositionally biased toward low complexity; sequence MAASPKLASSPKP. Over residues 1030–1044 the composition is skewed to pro residues; the sequence is ATSPKPLPSPKPSAS. 2 stretches are compositionally biased toward low complexity: residues 1045–1054 and 1061–1079; these read PKPSQSAKPS and SKSN…SSPN. Residue Lys1052 is modified to N6-acetyllysine. 3 stretches are compositionally biased toward polar residues: residues 1082-1148, 1158-1169, and 1308-1317; these read VAQS…NSLS, RGSNLNSSGANR, and HVQQTFNDGG. The residue at position 1107 (Ser1107) is a Phosphoserine. Lys1132 is subject to N6-acetyllysine. The span at 1321 to 1330 shows a compositional bias: basic and acidic residues; sequence GDTKLPRKSQ.

This sequence belongs to the ubinuclein family.

This is Ubinuclein-2 (UBN2) from Bos taurus (Bovine).